Here is a 218-residue protein sequence, read N- to C-terminus: Glutathione S-transferase Mu 1 (218 aa).

Residues 2–88 enclose the GST N-terminal domain; it reads PMILGYWNVR…YLARKHHLDG (87 aa). 7-8 serves as a coordination point for glutathione; the sequence is YW. The residue at position 34 (threonine 34) is a Phosphothreonine. Glutathione contacts are provided by residues 43 to 46, lysine 50, and 59 to 60; these read RSQW and NL. At serine 67 the chain carries Phosphoserine. 72 to 73 contributes to the glutathione binding site; sequence QS. In terms of domain architecture, GST C-terminal spans 90 to 208; the sequence is TEEERIRADI…KSSRYIATPI (119 aa). Tyrosine 116 lines the substrate pocket. Serine 210 bears the Phosphoserine mark.

Homodimer.

The protein localises to the cytoplasm. The enzyme catalyses RX + glutathione = an S-substituted glutathione + a halide anion + H(+). It catalyses the reaction prostaglandin A2 + glutathione = prostaglandin A2-S-(R)-glutathione. It carries out the reaction prostaglandin J2 + glutathione = prostaglandin J2-S-(R)-glutathione. The catalysed reaction is prostaglandin J2 + glutathione = prostaglandin J2-S-(S)-glutathione. The enzyme catalyses prostaglandin A2 + glutathione = prostaglandin A2-S-(S)-glutathione. It catalyses the reaction 11(S)-hydroxy-14(S),15(S)-epoxy-(5Z,8Z,12E)-eicosatrienoate + glutathione = (11S,15S)-dihydroxy-14(R)-S-glutathionyl-(5Z,8Z,12E)-eicosatrienoate. Its function is as follows. Conjugation of reduced glutathione to a wide number of exogenous and endogenous hydrophobic electrophiles. Involved in the formation of glutathione conjugates of both prostaglandin A2 (PGA2) and prostaglandin J2 (PGJ2). Participates in the formation of novel hepoxilin regioisomers. The sequence is that of Glutathione S-transferase Mu 1 from Mus musculus (Mouse).